The primary structure comprises 303 residues: Serine/threonine-protein phosphatase 6 catalytic subunit (303 aa).

4 residues coordinate Mn(2+): aspartate 51, histidine 53, aspartate 79, and asparagine 111. Residue histidine 112 is the Proton donor of the active site. Residues histidine 161 and histidine 235 each contribute to the Mn(2+) site.

It belongs to the PPP phosphatase family. PP-6 (PP-V) subfamily. Mn(2+) serves as cofactor.

It localises to the cytoplasm. The enzyme catalyses O-phospho-L-seryl-[protein] + H2O = L-seryl-[protein] + phosphate. The catalysed reaction is O-phospho-L-threonyl-[protein] + H2O = L-threonyl-[protein] + phosphate. In terms of biological role, may be involved in controlling cellularization or in regulating transcription of the genes involved in this process. In Drosophila melanogaster (Fruit fly), this protein is Serine/threonine-protein phosphatase 6 catalytic subunit (PpV).